Consider the following 502-residue polypeptide: Mannitol 2-dehydrogenase (502 aa).

37–48 (IVHIGVGGFHRA) is an NAD(+) binding site.

Belongs to the mannitol dehydrogenase family. Monomer.

It carries out the reaction D-mannitol + NAD(+) = D-fructose + NADH + H(+). Functionally, catalyzes the NAD(H)-dependent interconversion of D-fructose and D-mannitol in the mannitol metabolic pathway. This chain is Mannitol 2-dehydrogenase, found in Aspergillus fumigatus (strain CBS 144.89 / FGSC A1163 / CEA10) (Neosartorya fumigata).